A 489-amino-acid chain; its full sequence is Ribonuclease G (489 aa).

The 90-residue stretch at 39 to 128 (GNIYKGRVSR…LTTDITLPSR (90 aa)) folds into the S1 motif domain. Mg(2+) contacts are provided by D304 and D347.

Belongs to the RNase E/G family. RNase G subfamily. In terms of assembly, homodimer, in equilibrium with possible higher multimers. It depends on Mg(2+) as a cofactor.

Its subcellular location is the cytoplasm. In terms of biological role, an endonuclease that acts in the processing of the 5'-end of 16S rRNA and 23S rRNA. It prefers 5'-monophosphorylated substrates and cleaves single-stranded sites rich in A and U residues; contributes to tRNA processing and mRNA turnover. The protein is Ribonuclease G (rng) of Escherichia coli O157:H7.